A 194-amino-acid chain; its full sequence is UPF0215 protein TV0037 (194 aa).

The protein belongs to the UPF0215 family.

The chain is UPF0215 protein TV0037 from Thermoplasma volcanium (strain ATCC 51530 / DSM 4299 / JCM 9571 / NBRC 15438 / GSS1).